We begin with the raw amino-acid sequence, 95 residues long: Cell division topological specificity factor (95 aa).

The protein belongs to the MinE family.

In terms of biological role, prevents the cell division inhibition by proteins MinC and MinD at internal division sites while permitting inhibition at polar sites. This ensures cell division at the proper site by restricting the formation of a division septum at the midpoint of the long axis of the cell. This is Cell division topological specificity factor from Psychrobacter cryohalolentis (strain ATCC BAA-1226 / DSM 17306 / VKM B-2378 / K5).